Reading from the N-terminus, the 313-residue chain is Ribosomal RNA small subunit methyltransferase H (313 aa).

S-adenosyl-L-methionine is bound by residues G35–H37, D55, F80, D102, and Q109.

It belongs to the methyltransferase superfamily. RsmH family.

The protein localises to the cytoplasm. The catalysed reaction is cytidine(1402) in 16S rRNA + S-adenosyl-L-methionine = N(4)-methylcytidine(1402) in 16S rRNA + S-adenosyl-L-homocysteine + H(+). In terms of biological role, specifically methylates the N4 position of cytidine in position 1402 (C1402) of 16S rRNA. The polypeptide is Ribosomal RNA small subunit methyltransferase H (Shewanella amazonensis (strain ATCC BAA-1098 / SB2B)).